The primary structure comprises 468 residues: Peroxisome proliferator-activated receptor alpha (468 aa).

The segment at residues 99–173 is a DNA-binding region (nuclear receptor); sequence NIECRICGDK…VGMSHNAIRF (75 aa). 2 consecutive NR C4-type zinc fingers follow at residues 102-122 and 139-161; these read CRIC…CEGC and CDRS…FHKC. Residues 239 to 466 enclose the NR LBD domain; sequence FVIHDMETLC…HPLLQEIYRD (228 aa). Residues 304–433 form a required for heterodimerization with RXRA region; sequence DQVTLLKYGV…PKLLQKMVDL (130 aa).

It belongs to the nuclear hormone receptor family. NR1 subfamily. Heterodimer; with RXRA. This heterodimerization is required for DNA binding and transactivation activity. Interacts with NCOA3 coactivator. Interacts with CITED2; the interaction stimulates its transcriptional activity. Also interacts with PPARBP in vitro. Interacts with AKAP13, LPIN1, PRDM16 and coactivator NCOA6. Interacts with ASXL1 and ASXL2. Interacts with PER2. Interacts with SIRT1; the interaction seems to be modulated by NAD(+) levels. Interacts with CRY1 and CRY2. In hepatocytes, interacts with PAQR3 and HUWE1; the interactions promote PPARA poylubiquitination and HUWE1-mediated degradation. In terms of processing, phosphorylated. Post-translationally, ubiquitinated by E3 ubiquitin-protein ligase HUWE1; leading to proteasomal degradation. As to expression, expressed predominantly in liver and kidney.

The protein localises to the nucleus. In terms of biological role, ligand-activated transcription factor. Key regulator of lipid metabolism. Activated by the endogenous ligand 1-palmitoyl-2-oleoyl-sn-glycerol-3-phosphocholine (16:0/18:1-GPC). Activated by oleylethanolamide, a naturally occurring lipid that regulates satiety. Receptor for peroxisome proliferators such as hypolipidemic drugs and fatty acids. Regulates the peroxisomal beta-oxidation pathway of fatty acids. Functions as a transcription activator for the ACOX1 and P450 genes. Transactivation activity requires heterodimerization with RXRA and is antagonized by NR2C2. May be required for the propagation of clock information to metabolic pathways regulated by PER2. The sequence is that of Peroxisome proliferator-activated receptor alpha (Ppara) from Rattus norvegicus (Rat).